The following is a 93-amino-acid chain: MKTLVLLSALILLAFQVQADPIQNTDEETKTEEQPGKEDQAVSVSFGDPEGSSLQEESLRDLVCYCRTRGCKRRERMNGTCRKGHLIYTLCCR.

The N-terminal stretch at 1 to 19 (MKTLVLLSALILLAFQVQA) is a signal peptide. Positions 20–58 (DPIQNTDEETKTEEQPGKEDQAVSVSFGDPEGSSLQEES) are excised as a propeptide. The tract at residues 24–54 (NTDEETKTEEQPGKEDQAVSVSFGDPEGSSL) is disordered. A compositionally biased stretch (basic and acidic residues) spans 27 to 40 (EETKTEEQPGKEDQ). 3 disulfides stabilise this stretch: C64–C92, C66–C81, and C71–C91.

The protein belongs to the alpha-defensin family.

The protein localises to the secreted. Functionally, may have microbicidal activities. This is Alpha-defensin 23 (Defa23) from Mus musculus (Mouse).